The following is a 610-amino-acid chain: UvrABC system protein C (610 aa).

One can recognise a GIY-YIG domain in the interval 16–94; sequence SQPGVYSMYD…IKLYQPRYNV (79 aa). One can recognise a UVR domain in the interval 204 to 239; that stretch reads QQVLNQLVERMELASRALNFEDAAHARDQIQAVRRV.

It belongs to the UvrC family. In terms of assembly, interacts with UvrB in an incision complex.

Its subcellular location is the cytoplasm. Its function is as follows. The UvrABC repair system catalyzes the recognition and processing of DNA lesions. UvrC both incises the 5' and 3' sides of the lesion. The N-terminal half is responsible for the 3' incision and the C-terminal half is responsible for the 5' incision. The polypeptide is UvrABC system protein C (Sodalis glossinidius (strain morsitans)).